Reading from the N-terminus, the 166-residue chain is Signal peptidase complex catalytic subunit SEC11 (166 aa).

Residues 1 to 9 (MNIRQQITQ) are Cytoplasmic-facing. A helical; Signal-anchor for type II membrane protein transmembrane segment spans residues 10–30 (FLSLAYVFSSAFMLWKTLSVI). Residues 31-166 (ANSHSPIVVV…LGLSSLFSNE (136 aa)) lie on the Lumenal side of the membrane. Active-site charge relay system residues include S44, H83, and D108. Positions 152-163 (GMLGLLGLSSLF) are C-terminal short (CTS) helix.

Belongs to the peptidase S26B family. Component of the signal peptidase complex (SPC) composed of a catalytic subunit SEC11 and three accessory subunits SPC1, SPC2 and SPC3. The complex induces a local thinning of the ER membrane which is used to measure the length of the signal peptide (SP) h-region of protein substrates. This ensures the selectivity of the complex towards h-regions shorter than 18-20 amino acids. SPC associates with the translocon complex.

The protein resides in the endoplasmic reticulum membrane. The catalysed reaction is Cleavage of hydrophobic, N-terminal signal or leader sequences from secreted and periplasmic proteins.. Functionally, catalytic component of the signal peptidase complex (SPC) which catalyzes the cleavage of N-terminal signal sequences from nascent proteins as they are translocated into the lumen of the endoplasmic reticulum. Specifically cleaves N-terminal signal peptides that contain a hydrophobic alpha-helix (h-region) shorter than 18-20 amino acids. This chain is Signal peptidase complex catalytic subunit SEC11 (SEC11), found in Candida albicans (strain SC5314 / ATCC MYA-2876) (Yeast).